The following is a 332-amino-acid chain: uncharacterized protein (332 aa).

The segment at Glu306–Phe332 is disordered.

This is an uncharacterized protein from Homo sapiens (Human).